A 289-amino-acid chain; its full sequence is 4-diphosphocytidyl-2-C-methyl-D-erythritol kinase (289 aa).

The active site involves Lys15. Residue 100 to 110 participates in ATP binding; that stretch reads PVSAGLAGGSA. Asp140 is an active-site residue.

This sequence belongs to the GHMP kinase family. IspE subfamily.

The enzyme catalyses 4-CDP-2-C-methyl-D-erythritol + ATP = 4-CDP-2-C-methyl-D-erythritol 2-phosphate + ADP + H(+). Its pathway is isoprenoid biosynthesis; isopentenyl diphosphate biosynthesis via DXP pathway; isopentenyl diphosphate from 1-deoxy-D-xylulose 5-phosphate: step 3/6. In terms of biological role, catalyzes the phosphorylation of the position 2 hydroxy group of 4-diphosphocytidyl-2C-methyl-D-erythritol. The polypeptide is 4-diphosphocytidyl-2-C-methyl-D-erythritol kinase (Anaplasma marginale (strain Florida)).